Here is an 87-residue protein sequence, read N- to C-terminus: Neurotoxin LmNaTx64.1 (87 aa).

An N-terminal signal peptide occupies residues 1–18; that stretch reads MKILFLIILTAFFIGVHC. The 67-residue stretch at 19–85 folds into the LCN-type CS-alpha/beta domain; it reads KHGYPIIRAG…TWSRATNKCK (67 aa). 4 disulfides stabilise this stretch: cysteine 33–cysteine 84, cysteine 37–cysteine 58, cysteine 44–cysteine 65, and cysteine 48–cysteine 67. Residue cysteine 84 is modified to Cysteine amide.

Belongs to the long (4 C-C) scorpion toxin superfamily. Sodium channel inhibitor family. Beta subfamily. As to expression, expressed by the venom gland.

It is found in the secreted. Functionally, binds voltage-independently at site-4 of sodium channels (Nav) and shift the voltage of activation toward more negative potentials thereby affecting sodium channel activation and promoting spontaneous and repetitive firing. In Lychas mucronatus (Chinese swimming scorpion), this protein is Neurotoxin LmNaTx64.1.